A 91-amino-acid chain; its full sequence is UPF0250 protein PP_4802 (91 aa).

This sequence belongs to the UPF0250 family.

The sequence is that of UPF0250 protein PP_4802 from Pseudomonas putida (strain ATCC 47054 / DSM 6125 / CFBP 8728 / NCIMB 11950 / KT2440).